The chain runs to 156 residues: Protein-export protein SecB (156 aa).

This sequence belongs to the SecB family. As to quaternary structure, homotetramer, a dimer of dimers. One homotetramer interacts with 1 SecA dimer.

The protein resides in the cytoplasm. In terms of biological role, one of the proteins required for the normal export of preproteins out of the cell cytoplasm. It is a molecular chaperone that binds to a subset of precursor proteins, maintaining them in a translocation-competent state. It also specifically binds to its receptor SecA. The chain is Protein-export protein SecB from Paraburkholderia xenovorans (strain LB400).